Here is a 986-residue protein sequence, read N- to C-terminus: DNA polymerase (986 aa).

Disordered regions lie at residues 804-824 (DNPGKKRKSADDNNEGPSPKR) and 944-969 (RKRDDDDDNNDDDDDDGCDSSDSEND). The segment covering 948–968 (DDDDNNDDDDDDGCDSSDSEN) has biased composition (acidic residues).

This sequence belongs to the DNA polymerase type-B family.

The catalysed reaction is DNA(n) + a 2'-deoxyribonucleoside 5'-triphosphate = DNA(n+1) + diphosphate. In terms of biological role, replicates the viral genome, host DNA polymerases cannot substitute for the viral enzyme in this process. This chain is DNA polymerase (POL), found in Bombyx mori (Silk moth).